A 212-amino-acid polypeptide reads, in one-letter code: uncharacterized protein (212 aa).

An N-terminal signal peptide occupies residues 1–18 (MIPLVALLVLLTLQASPG). A helical transmembrane segment spans residues 186 to 208 (IYRLATFFMVSLFVGSFVALVFV).

It to A.fulgidus AF_0540.

It localises to the membrane. This is an uncharacterized protein from Archaeoglobus fulgidus (strain ATCC 49558 / DSM 4304 / JCM 9628 / NBRC 100126 / VC-16).